The chain runs to 69 residues: Large ribosomal subunit protein uL29 (69 aa).

The protein belongs to the universal ribosomal protein uL29 family.

The sequence is that of Large ribosomal subunit protein uL29 from Clostridium perfringens (strain ATCC 13124 / DSM 756 / JCM 1290 / NCIMB 6125 / NCTC 8237 / Type A).